The sequence spans 413 residues: Probable protein S-acyltransferase 3 (413 aa).

The next 2 membrane-spanning stretches (helical) occupy residues 65 to 85 (LTSF…LVWI) and 96 to 116 (VLAS…LTSA). One can recognise a DHHC domain in the interval 171-221 (KFCDTCLLYRPPRASHCSICNNCVQRFDHHCPWVGQCIARRNYPFFICFIS). Catalysis depends on Cys201, which acts as the S-palmitoyl cysteine intermediate. Transmembrane regions (helical) follow at residues 216–236 (FICF…FSWI) and 255–275 (SVIL…LTIF). Positions 364–413 (RDSPRKLPLPTRNLDDIKDISDNYDRSTTTREDASDRDPSFFSSQLDLPK) are disordered. Basic and acidic residues predominate over residues 376–402 (NLDDIKDISDNYDRSTTTREDASDRDP). The span at 404 to 413 (FFSSQLDLPK) shows a compositional bias: polar residues.

It belongs to the DHHC palmitoyltransferase family. As to expression, expressed in flowers and pollen.

Its subcellular location is the endoplasmic reticulum membrane. The protein resides in the cytoplasmic vesicle membrane. The catalysed reaction is L-cysteinyl-[protein] + hexadecanoyl-CoA = S-hexadecanoyl-L-cysteinyl-[protein] + CoA. Its function is as follows. Palmitoyl acyltransferase. In Arabidopsis thaliana (Mouse-ear cress), this protein is Probable protein S-acyltransferase 3 (PAT03).